Here is a 129-residue protein sequence, read N- to C-terminus: Small ribosomal subunit protein uS11 (129 aa).

This sequence belongs to the universal ribosomal protein uS11 family. In terms of assembly, part of the 30S ribosomal subunit. Interacts with proteins S7 and S18. Binds to IF-3.

Located on the platform of the 30S subunit, it bridges several disparate RNA helices of the 16S rRNA. Forms part of the Shine-Dalgarno cleft in the 70S ribosome. This is Small ribosomal subunit protein uS11 from Vibrio atlanticus (strain LGP32) (Vibrio splendidus (strain Mel32)).